The primary structure comprises 84 residues: Small ribosomal subunit protein bS16 (84 aa).

It belongs to the bacterial ribosomal protein bS16 family.

The polypeptide is Small ribosomal subunit protein bS16 (Dechloromonas aromatica (strain RCB)).